The sequence spans 150 residues: Large ribosomal subunit protein bL9 (150 aa).

It belongs to the bacterial ribosomal protein bL9 family.

Its function is as follows. Binds to the 23S rRNA. This Delftia acidovorans (strain DSM 14801 / SPH-1) protein is Large ribosomal subunit protein bL9.